Here is a 341-residue protein sequence, read N- to C-terminus: UDP-3-O-(3-hydroxymyristoyl)glucosamine N-acyltransferase (341 aa).

H239 acts as the Proton acceptor in catalysis.

This sequence belongs to the transferase hexapeptide repeat family. LpxD subfamily. In terms of assembly, homotrimer.

The enzyme catalyses a UDP-3-O-[(3R)-3-hydroxyacyl]-alpha-D-glucosamine + a (3R)-hydroxyacyl-[ACP] = a UDP-2-N,3-O-bis[(3R)-3-hydroxyacyl]-alpha-D-glucosamine + holo-[ACP] + H(+). It catalyses the reaction UDP-3-O-[(3R)-3-hydroxytetradecanoyl]-alpha-D-glucosamine + (3R)-hydroxytetradecanoyl-[ACP] = UDP-2-N,3-O-bis[(3R)-3-hydroxytetradecanoyl]-alpha-D-glucosamine + holo-[ACP] + H(+). It functions in the pathway glycolipid biosynthesis; lipid IV(A) biosynthesis; lipid IV(A) from (3R)-3-hydroxytetradecanoyl-[acyl-carrier-protein] and UDP-N-acetyl-alpha-D-glucosamine: step 3/6. Its function is as follows. Catalyzes the N-acylation of UDP-3-O-(hydroxytetradecanoyl)glucosamine using 3-hydroxytetradecanoyl-ACP as the acyl donor. Is involved in the biosynthesis of lipid A, a phosphorylated glycolipid that anchors the lipopolysaccharide to the outer membrane of the cell. The protein is UDP-3-O-(3-hydroxymyristoyl)glucosamine N-acyltransferase of Escherichia coli (strain UTI89 / UPEC).